Reading from the N-terminus, the 187-residue chain is MNKWKRLFFILLAINFILAAGFVALVLLPGEQAQVKDASESEYGFQVTSTKESLAAFVNSYLNDKASNKLDYKVEIDDDVHVAGKIKAFSTSIDAFIAFEPTVKKNGDVELNVTKFSLGKLSIPISFVLNYMDSFYELPSFVHVHPGDKSIEVRLSEMPLTNGMYVKADKINLEKDEIEFSYYHPKQ.

The chain crosses the membrane as a helical span at residues 8-28; it reads FFILLAINFILAAGFVALVLL.

It is found in the membrane. This is an uncharacterized protein from Bacillus subtilis (strain 168).